Consider the following 177-residue polypeptide: Large ribosomal subunit protein uL6 (177 aa).

The protein belongs to the universal ribosomal protein uL6 family. Part of the 50S ribosomal subunit.

This protein binds to the 23S rRNA, and is important in its secondary structure. It is located near the subunit interface in the base of the L7/L12 stalk, and near the tRNA binding site of the peptidyltransferase center. The sequence is that of Large ribosomal subunit protein uL6 from Mesorhizobium japonicum (strain LMG 29417 / CECT 9101 / MAFF 303099) (Mesorhizobium loti (strain MAFF 303099)).